We begin with the raw amino-acid sequence, 580 residues long: Small conductance calcium-activated potassium channel protein 2 (580 aa).

Disordered regions lie at residues 1–68 (MSSC…VSKP) and 88–116 (GGGG…KKNQ). Residues 48 to 61 (SSPSAAAAASSSAP) show a composition bias toward low complexity. Gly residues predominate over residues 88-104 (GGGGGGGGGGGGSGHGS). Residues 140–160 (LIFGMFGIVVMVIETELSWGA) traverse the membrane as a helical segment. The residue at position 161 (Tyr161) is a Phosphotyrosine. A helical membrane pass occupies residues 169–189 (LALKCLISLSTIILLGLIIVY). A helical transmembrane segment spans residues 215 to 235 (IFFICLEILVCAIHPIPGNYT). The chain crosses the membrane as a helical span at residues 257-277 (IILSIPMFLRLYLIARVMLLH). The chain crosses the membrane as a helical span at residues 306–326 (LMTICPGTVLLVFSISLWIIA). The pore-forming intramembrane region spans 346 to 366 (FLGAMWLISITFLSIGYGDMV). Residues 375–395 (VCLLTGIMGAGCTALVVAVVA) form a helical membrane-spanning segment. A calmodulin-binding region spans residues 413–489 (DTQLTKRVKN…LVDLAKTQNI (77 aa)). The segment covering 551–560 (HVTYNAERSR) has biased composition (basic and acidic residues). Residues 551–580 (HVTYNAERSRSSSRRRRSSSTAPPTSSESS) form a disordered region. The segment covering 569 to 580 (SSTAPPTSSESS) has biased composition (low complexity).

Belongs to the potassium channel KCNN family. KCa2.2/KCNN2 subfamily. As to quaternary structure, homodimer. Heteromultimer with KCNN1 and KCNN3. The complex is composed of 4 channel subunits each of which binds to a calmodulin subunit which regulates the channel activity through calcium-binding. Interacts (via N-terminal domain) with MPP2. Brain.

It localises to the membrane. It is found in the cytoplasm. The protein resides in the myofibril. Its subcellular location is the sarcomere. The protein localises to the z line. The catalysed reaction is K(+)(in) = K(+)(out). Inhibited by bee venom neurotoxin apamin. Inhibited by UCL 1684 and tetraethylammonium (TEA). Its function is as follows. Small conductance calcium-activated potassium channel that mediates the voltage-independent transmembrane transfer of potassium across the cell membrane through a constitutive interaction with calmodulin which binds the intracellular calcium allowing its opening. The current is characterized by a voltage-independent activation, an intracellular calcium concentration increase-dependent activation and a single-channel conductance of about 3 picosiemens. Also presents an inwardly rectifying current, thus reducing its already small outward conductance of potassium ions, which is particularly the case when the membrane potential displays positive values, above + 20 mV. The inward rectification could be due to a blockade of the outward current by intracellular divalent cations such as calcium and magnesium and could also be due to an intrinsic property of the channel pore, independent of intracellular divalent ions. There are three positively charged amino acids in the S6 transmembrane domain, close to the pore, that collectively control the conductance and rectification through an electrostatic mechanism. Additionally, electrostatic contributions from these residues also play an important role in determining the intrinsic open probability of the channel in the absence of calcium, affecting the apparent calcium affinity for activation. Forms an heteromeric complex with calmodulin, which is constitutively associated in a calcium-independent manner. Channel opening is triggered when calcium binds the calmodulin resulting in a rotary movement leading to the formation of the dimeric complex to open the gate. Plays a role in the repolarization phase of cardiac action potential. This Rattus norvegicus (Rat) protein is Small conductance calcium-activated potassium channel protein 2.